A 408-amino-acid chain; its full sequence is Imidazolonepropionase (408 aa).

Fe(3+)-binding residues include His-73 and His-75. The Zn(2+) site is built by His-73 and His-75. 4-imidazolone-5-propanoate-binding residues include Arg-82, Tyr-145, and His-178. Tyr-145 is an N-formimidoyl-L-glutamate binding site. His-243 serves as a coordination point for Fe(3+). His-243 serves as a coordination point for Zn(2+). A 4-imidazolone-5-propanoate-binding site is contributed by Gln-246. Asp-318 provides a ligand contact to Fe(3+). Asp-318 serves as a coordination point for Zn(2+). Asn-320 and Gly-322 together coordinate N-formimidoyl-L-glutamate. A 4-imidazolone-5-propanoate-binding site is contributed by Ser-323.

The protein belongs to the metallo-dependent hydrolases superfamily. HutI family. The cofactor is Zn(2+). It depends on Fe(3+) as a cofactor.

It is found in the cytoplasm. The enzyme catalyses 4-imidazolone-5-propanoate + H2O = N-formimidoyl-L-glutamate. It functions in the pathway amino-acid degradation; L-histidine degradation into L-glutamate; N-formimidoyl-L-glutamate from L-histidine: step 3/3. In terms of biological role, catalyzes the hydrolytic cleavage of the carbon-nitrogen bond in imidazolone-5-propanoate to yield N-formimidoyl-L-glutamate. It is the third step in the universal histidine degradation pathway. In Shewanella loihica (strain ATCC BAA-1088 / PV-4), this protein is Imidazolonepropionase.